Consider the following 215-residue polypeptide: Ribose-5-phosphate isomerase A (215 aa).

Residues 26-29 (TGST), 79-82 (DGAD), and 92-95 (KGGG) each bind substrate. E101 (proton acceptor) is an active-site residue. K119 provides a ligand contact to substrate.

It belongs to the ribose 5-phosphate isomerase family. Homodimer.

The catalysed reaction is aldehydo-D-ribose 5-phosphate = D-ribulose 5-phosphate. It participates in carbohydrate degradation; pentose phosphate pathway; D-ribose 5-phosphate from D-ribulose 5-phosphate (non-oxidative stage): step 1/1. Catalyzes the reversible conversion of ribose-5-phosphate to ribulose 5-phosphate. In Xanthomonas oryzae pv. oryzae (strain MAFF 311018), this protein is Ribose-5-phosphate isomerase A.